The sequence spans 338 residues: MNQISNPLKGNNNKIPIWFMRQAGRYLSEYKKVRETTKNFLDFCYDVNKATEVTLQPIKRYGFDAAIIFSDILVLPHAFGWEIDFKENIGPILKQFKSQEDFKYLQSNPNNKLGKVYEIIKKVKADLTSTTSLIGFAGSPWTVMSYMLEGKGKHDFKTSKKFIYENKILAKELLNFITEKTADHLINQAKSGADVLKLFDSWSGVLPEDEFTKFVIEPTKKIILKVKEVFPKIPMIAFPKGAGLLYEKFIKEVPVDILAVDQMVPLEKMKKWSDKVIVQGNLDPVVLLTNKEIIKEKAYKIIQEMKGKNFIFNLGHGILPKTPPENVEFLTECIRSCE.

Substrate-binding positions include 21 to 25 (RQAGR), Asp-71, Tyr-146, Ser-201, and His-316.

It belongs to the uroporphyrinogen decarboxylase family. Homodimer.

The protein resides in the cytoplasm. It carries out the reaction uroporphyrinogen III + 4 H(+) = coproporphyrinogen III + 4 CO2. Its pathway is porphyrin-containing compound metabolism; protoporphyrin-IX biosynthesis; coproporphyrinogen-III from 5-aminolevulinate: step 4/4. Functionally, catalyzes the decarboxylation of four acetate groups of uroporphyrinogen-III to yield coproporphyrinogen-III. The protein is Uroporphyrinogen decarboxylase of Rickettsia akari (strain Hartford).